The chain runs to 58 residues: UPF0391 membrane protein ABO_0024 (58 aa).

Helical transmembrane passes span 4–24 (WALT…GGIA) and 28–48 (ASIA…SLVV).

It belongs to the UPF0391 family.

Its subcellular location is the cell membrane. This chain is UPF0391 membrane protein ABO_0024, found in Alcanivorax borkumensis (strain ATCC 700651 / DSM 11573 / NCIMB 13689 / SK2).